Consider the following 118-residue polypeptide: Holo-[acyl-carrier-protein] synthase (118 aa).

Mg(2+) contacts are provided by Asp9 and Glu52.

Belongs to the P-Pant transferase superfamily. AcpS family. The cofactor is Mg(2+).

The protein resides in the cytoplasm. It catalyses the reaction apo-[ACP] + CoA = holo-[ACP] + adenosine 3',5'-bisphosphate + H(+). Transfers the 4'-phosphopantetheine moiety from coenzyme A to a Ser of acyl-carrier-protein. This chain is Holo-[acyl-carrier-protein] synthase, found in Frankia alni (strain DSM 45986 / CECT 9034 / ACN14a).